The chain runs to 464 residues: Anthocyanidin 3-O-galactosyltransferase 3GT1 (464 aa).

Serine 19 and histidine 21 together coordinate an anthocyanidin. Residue histidine 21 is the Proton acceptor of the active site. Asparagine 38 carries N-linked (GlcNAc...) asparagine glycosylation. Aspartate 121 acts as the Charge relay in catalysis. Position 152 (histidine 152) interacts with an anthocyanidin. Alanine 342, glutamine 344, histidine 359, tryptophan 362, asparagine 363, serine 364, and glutamate 367 together coordinate UDP-alpha-D-glucose. Glycine 382 is a binding site for an anthocyanidin. Aspartate 383 contributes to the UDP-alpha-D-glucose binding site.

Belongs to the UDP-glycosyltransferase family. As to quaternary structure, monomer. In terms of tissue distribution, mostly expressed in leaves and flowers and, to a lower extent, in roots. In flowers, mainly observed in petals, toruses and scapes, and at lower levels in pistils and stamens.

The enzyme catalyses cyanidin + UDP-alpha-D-galactose = cyanidin 3-O-beta-D-galactoside + UDP + H(+). It carries out the reaction cyanidin + UDP-alpha-D-glucose = cyanidin 3-O-beta-D-glucoside + UDP + H(+). It catalyses the reaction delphinidin + UDP-alpha-D-glucose = delphinidin 3-O-beta-D-glucoside + UDP. The catalysed reaction is malvidin + UDP-alpha-D-glucose = malvidin 3-O-beta-D-glucoside + UDP. The enzyme catalyses delphinidin + UDP-alpha-D-galactose = delphinidin 3-O-beta-D-galactoside + UDP + H(+). It carries out the reaction pelargonidin + UDP-alpha-D-galactose = pelargonidin 3-O-beta-D-galactoside betaine + UDP. It catalyses the reaction peonidin + UDP-alpha-D-galactose = peonidin 3-O-beta-D-galactoside + UDP. The catalysed reaction is malvidin + UDP-alpha-D-galactose = malvidin 3-O-beta-D-galactoside + UDP + H(+). The enzyme catalyses petunidin + UDP-alpha-D-galactose = petunidin 3-O-beta-D-galactoside + UDP. It carries out the reaction an anthocyanidin + UDP-alpha-D-glucose + H(+) = an anthocyanidin 3-O-beta-D-glucoside + UDP. It catalyses the reaction an anthocyanidin + UDP-alpha-D-galactose = an anthocyanidin 3-O-beta-D-galactoside + UDP. The protein operates within pigment biosynthesis; anthocyanin biosynthesis. Functionally, flavonoid 3-O-glycosyltransferase involved in the biosynthesis of anthocyanins conferring flower red/pink colors, mainly anthocyanidin 3-O-glycosides. Catalyzes the addition of UDP-sugar to the 3-OH of anthocyanidin, with a preference for UDP-galactose (UDP-Gal) as sugar donor and cyanidin as substrate; able to use delphinidin, pelargonidin, peonidin, malvidin and petunidin as substrates in the presence of UDP-Gal. Can also use UDP-glucose (UDP-Glu) as sugar donor with delphinidin, cyanidin and malvidin as substrates, but not active on pelargonidin, peonidin and petunidin. This chain is Anthocyanidin 3-O-galactosyltransferase 3GT1, found in Rhododendron delavayi (Rhododendron).